We begin with the raw amino-acid sequence, 936 residues long: Bifunctional uridylyltransferase/uridylyl-removing enzyme (936 aa).

Residues 1–372 (MTIPRIRQPR…SIATLLMRKR (372 aa)) form a uridylyltransferase region. Residues 373 to 727 (NLGDFVLDGG…VLPDPERAVS (355 aa)) form a uridylyl-removing region. The region spanning 488-610 (TDEHTIRAIG…VQSVERLHLL (123 aa)) is the HD domain. ACT domains follow at residues 728-809 (EVLV…KALR) and 840-915 (VIEI…TVPR). Positions 915-930 (RKVEEGAEQGAEKADA) are enriched in basic and acidic residues. Residues 915-936 (RKVEEGAEQGAEKADAGEIVAA) are disordered.

This sequence belongs to the GlnD family. Mg(2+) serves as cofactor.

It carries out the reaction [protein-PII]-L-tyrosine + UTP = [protein-PII]-uridylyl-L-tyrosine + diphosphate. It catalyses the reaction [protein-PII]-uridylyl-L-tyrosine + H2O = [protein-PII]-L-tyrosine + UMP + H(+). Its activity is regulated as follows. Uridylyltransferase (UTase) activity is inhibited by glutamine, while glutamine activates uridylyl-removing (UR) activity. Functionally, modifies, by uridylylation and deuridylylation, the PII regulatory proteins (GlnB and homologs), in response to the nitrogen status of the cell that GlnD senses through the glutamine level. Under low glutamine levels, catalyzes the conversion of the PII proteins and UTP to PII-UMP and PPi, while under higher glutamine levels, GlnD hydrolyzes PII-UMP to PII and UMP (deuridylylation). Thus, controls uridylylation state and activity of the PII proteins, and plays an important role in the regulation of nitrogen fixation and metabolism. The polypeptide is Bifunctional uridylyltransferase/uridylyl-removing enzyme (Rhodospirillum rubrum (strain ATCC 11170 / ATH 1.1.1 / DSM 467 / LMG 4362 / NCIMB 8255 / S1)).